Reading from the N-terminus, the 214-residue chain is Thioredoxin-like 4, chloroplastic (214 aa).

The segment covering Met-1 to Ser-20 has biased composition (low complexity). The disordered stretch occupies residues Met-1–Pro-68. The N-terminal 71 residues, Met-1 to Val-71, are a transit peptide targeting the chloroplast. Pro residues predominate over residues Leu-21–Pro-34. Over residues Ser-42 to Ser-53 the composition is skewed to low complexity. Residues Val-72–Ala-199 form the Thioredoxin domain. Residues Cys-117 and Cys-120 each act as nucleophile in the active site. The cysteines at positions 117 and 120 are disulfide-linked.

This sequence belongs to the thioredoxin family.

It localises to the plastid. Its subcellular location is the chloroplast. Probable thiol-disulfide oxidoreductase that may participate in various redox reactions. This is Thioredoxin-like 4, chloroplastic from Oryza sativa subsp. japonica (Rice).